Consider the following 572-residue polypeptide: Proline--tRNA ligase (572 aa).

Belongs to the class-II aminoacyl-tRNA synthetase family. ProS type 1 subfamily. As to quaternary structure, homodimer.

It is found in the cytoplasm. The catalysed reaction is tRNA(Pro) + L-proline + ATP = L-prolyl-tRNA(Pro) + AMP + diphosphate. In terms of biological role, catalyzes the attachment of proline to tRNA(Pro) in a two-step reaction: proline is first activated by ATP to form Pro-AMP and then transferred to the acceptor end of tRNA(Pro). As ProRS can inadvertently accommodate and process non-cognate amino acids such as alanine and cysteine, to avoid such errors it has two additional distinct editing activities against alanine. One activity is designated as 'pretransfer' editing and involves the tRNA(Pro)-independent hydrolysis of activated Ala-AMP. The other activity is designated 'posttransfer' editing and involves deacylation of mischarged Ala-tRNA(Pro). The misacylated Cys-tRNA(Pro) is not edited by ProRS. This is Proline--tRNA ligase from Erwinia tasmaniensis (strain DSM 17950 / CFBP 7177 / CIP 109463 / NCPPB 4357 / Et1/99).